The chain runs to 194 residues: Small ribosomal subunit protein uS4c (194 aa).

A disordered region spans residues 1–29 (RFKKIRRLGTLPGLTSKRPRSGSDLKNPL). The S4 RNA-binding domain maps to 82–143 (MRLDNILFRL…KQRSKALIQN (62 aa)).

The protein belongs to the universal ribosomal protein uS4 family. As to quaternary structure, part of the 30S ribosomal subunit. Contacts protein S5. The interaction surface between S4 and S5 is involved in control of translational fidelity.

It is found in the plastid. The protein localises to the chloroplast. Functionally, one of the primary rRNA binding proteins, it binds directly to 16S rRNA where it nucleates assembly of the body of the 30S subunit. Its function is as follows. With S5 and S12 plays an important role in translational accuracy. This is Small ribosomal subunit protein uS4c (rps4) from Furcraea foetida (Mauritius hemp).